A 633-amino-acid polypeptide reads, in one-letter code: DNA mismatch repair protein MutL (633 aa).

The protein belongs to the DNA mismatch repair MutL/HexB family.

In terms of biological role, this protein is involved in the repair of mismatches in DNA. It is required for dam-dependent methyl-directed DNA mismatch repair. May act as a 'molecular matchmaker', a protein that promotes the formation of a stable complex between two or more DNA-binding proteins in an ATP-dependent manner without itself being part of a final effector complex. The polypeptide is DNA mismatch repair protein MutL (Pseudomonas fluorescens (strain SBW25)).